The sequence spans 286 residues: uncharacterized protein (286 aa).

The AB hydrolase-1 domain maps to 26–268; sequence PLIILCHGFC…DACHYDIYEG (243 aa).

It to E.coli YcjY.

This is an uncharacterized protein from Escherichia coli.